A 256-amino-acid polypeptide reads, in one-letter code: Imidazole glycerol phosphate synthase subunit HisF (256 aa).

Residues aspartate 12 and aspartate 131 contribute to the active site.

It belongs to the HisA/HisF family. As to quaternary structure, heterodimer of HisH and HisF.

Its subcellular location is the cytoplasm. It carries out the reaction 5-[(5-phospho-1-deoxy-D-ribulos-1-ylimino)methylamino]-1-(5-phospho-beta-D-ribosyl)imidazole-4-carboxamide + L-glutamine = D-erythro-1-(imidazol-4-yl)glycerol 3-phosphate + 5-amino-1-(5-phospho-beta-D-ribosyl)imidazole-4-carboxamide + L-glutamate + H(+). It participates in amino-acid biosynthesis; L-histidine biosynthesis; L-histidine from 5-phospho-alpha-D-ribose 1-diphosphate: step 5/9. Functionally, IGPS catalyzes the conversion of PRFAR and glutamine to IGP, AICAR and glutamate. The HisF subunit catalyzes the cyclization activity that produces IGP and AICAR from PRFAR using the ammonia provided by the HisH subunit. The sequence is that of Imidazole glycerol phosphate synthase subunit HisF from Pseudomonas entomophila (strain L48).